The chain runs to 552 residues: Non-structural protein NS1 (552 aa).

This sequence belongs to the orbivirus non-structural protein NS1 family.

This chain is Non-structural protein NS1 (Segment-5), found in Antilocapra americana (Pronghorn).